Here is a 363-residue protein sequence, read N- to C-terminus: Aminomethyltransferase (363 aa).

This sequence belongs to the GcvT family. The glycine cleavage system is composed of four proteins: P, T, L and H.

The catalysed reaction is N(6)-[(R)-S(8)-aminomethyldihydrolipoyl]-L-lysyl-[protein] + (6S)-5,6,7,8-tetrahydrofolate = N(6)-[(R)-dihydrolipoyl]-L-lysyl-[protein] + (6R)-5,10-methylene-5,6,7,8-tetrahydrofolate + NH4(+). The glycine cleavage system catalyzes the degradation of glycine. This Thermotoga neapolitana (strain ATCC 49049 / DSM 4359 / NBRC 107923 / NS-E) protein is Aminomethyltransferase.